The following is a 180-amino-acid chain: Cuticle protein 3 (180 aa).

Positions 1-16 (MMKLIVLAAFIGVCAG) are cleaved as a signal peptide. One can recognise a Chitin-binding type R&amp;R domain in the interval 58–121 (EQGFRYAYET…PQGAHFPTPP (64 aa)).

This Lonomia obliqua (Moth) protein is Cuticle protein 3.